A 657-amino-acid polypeptide reads, in one-letter code: Glycogen debranching enzyme (657 aa).

The active-site Nucleophile is the Asp-336. Glu-371 functions as the Proton donor in the catalytic mechanism. The segment at 460–479 is disordered; it reads ANGEENRDGTNNNYSNNHGK.

It belongs to the glycosyl hydrolase 13 family.

The catalysed reaction is Hydrolysis of (1-&gt;6)-alpha-D-glucosidic linkages to branches with degrees of polymerization of three or four glucose residues in limit dextrin.. It functions in the pathway glycan degradation; glycogen degradation. Functionally, removes maltotriose and maltotetraose chains that are attached by 1,6-alpha-linkage to the limit dextrin main chain, generating a debranched limit dextrin. This is Glycogen debranching enzyme from Escherichia coli (strain UTI89 / UPEC).